The chain runs to 181 residues: Anthrone oxygenase encC (181 aa).

The next 4 membrane-spanning stretches (helical) occupy residues 1-21 (MASV…WLSG), 65-81 (QIAA…AWCA), 88-108 (LLYG…LLFM), and 153-173 (FLAG…LFAA).

The protein belongs to the anthrone oxygenase family. Endocrocin is specifically produced in conidia.

The protein resides in the membrane. Functionally, anthrone oxygenase; part of the gene cluster that mediates the biosynthesis of endocrocin, a simple anthraquinone interesting for many biotechnological applications. The pathway begins with the synthesis of atrochrysone thioester by the polyketide synthase (PKS) encA. The atrochrysone carboxyl ACP thioesterase encB then breaks the thioester bond and releases the atrochrysone carboxylic acid from encA. The atrochrysone carboxylic acid is then converted to endocrocin anthrone which is further oxidized into endocrocin by the anthrone oxygenase encC. The exact function of encD has not been identified yet, but it negatively regulates endocrocin production, likely through the modification of endocrocin itself. The sequence is that of Anthrone oxygenase encC from Aspergillus fumigatus (strain ATCC MYA-4609 / CBS 101355 / FGSC A1100 / Af293) (Neosartorya fumigata).